A 20-amino-acid chain; its full sequence is Cytochrome c oxidase subunit 8B, mitochondrial (20 aa).

It belongs to the cytochrome c oxidase VIII family. In terms of assembly, component of the cytochrome c oxidase (complex IV, CIV), a multisubunit enzyme composed of 14 subunits. The complex is composed of a catalytic core of 3 subunits MT-CO1, MT-CO2 and MT-CO3, encoded in the mitochondrial DNA, and 11 supernumerary subunits COX4I, COX5A, COX5B, COX6A, COX6B, COX6C, COX7A, COX7B, COX7C, COX8 and NDUFA4, which are encoded in the nuclear genome. The complex exists as a monomer or a dimer and forms supercomplexes (SCs) in the inner mitochondrial membrane with NADH-ubiquinone oxidoreductase (complex I, CI) and ubiquinol-cytochrome c oxidoreductase (cytochrome b-c1 complex, complex III, CIII), resulting in different assemblies (supercomplex SCI(1)III(2)IV(1) and megacomplex MCI(2)III(2)IV(2)).

It is found in the mitochondrion inner membrane. It functions in the pathway energy metabolism; oxidative phosphorylation. Functionally, component of the cytochrome c oxidase, the last enzyme in the mitochondrial electron transport chain which drives oxidative phosphorylation. The respiratory chain contains 3 multisubunit complexes succinate dehydrogenase (complex II, CII), ubiquinol-cytochrome c oxidoreductase (cytochrome b-c1 complex, complex III, CIII) and cytochrome c oxidase (complex IV, CIV), that cooperate to transfer electrons derived from NADH and succinate to molecular oxygen, creating an electrochemical gradient over the inner membrane that drives transmembrane transport and the ATP synthase. Cytochrome c oxidase is the component of the respiratory chain that catalyzes the reduction of oxygen to water. Electrons originating from reduced cytochrome c in the intermembrane space (IMS) are transferred via the dinuclear copper A center (CU(A)) of subunit 2 and heme A of subunit 1 to the active site in subunit 1, a binuclear center (BNC) formed by heme A3 and copper B (CU(B)). The BNC reduces molecular oxygen to 2 water molecules using 4 electrons from cytochrome c in the IMS and 4 protons from the mitochondrial matrix. The chain is Cytochrome c oxidase subunit 8B, mitochondrial from Thunnus obesus (Bigeye tuna).